The chain runs to 214 residues: Imidazole glycerol phosphate synthase subunit HisH (214 aa).

A Glutamine amidotransferase type-1 domain is found at 2–214 (RVALIDYGSG…LIANFLRWAP (213 aa)). The active-site Nucleophile is C88. Active-site residues include H194 and E196.

In terms of assembly, heterodimer of HisH and HisF.

It localises to the cytoplasm. It catalyses the reaction 5-[(5-phospho-1-deoxy-D-ribulos-1-ylimino)methylamino]-1-(5-phospho-beta-D-ribosyl)imidazole-4-carboxamide + L-glutamine = D-erythro-1-(imidazol-4-yl)glycerol 3-phosphate + 5-amino-1-(5-phospho-beta-D-ribosyl)imidazole-4-carboxamide + L-glutamate + H(+). It carries out the reaction L-glutamine + H2O = L-glutamate + NH4(+). The protein operates within amino-acid biosynthesis; L-histidine biosynthesis; L-histidine from 5-phospho-alpha-D-ribose 1-diphosphate: step 5/9. In terms of biological role, IGPS catalyzes the conversion of PRFAR and glutamine to IGP, AICAR and glutamate. The HisH subunit catalyzes the hydrolysis of glutamine to glutamate and ammonia as part of the synthesis of IGP and AICAR. The resulting ammonia molecule is channeled to the active site of HisF. This Rhodospirillum rubrum (strain ATCC 11170 / ATH 1.1.1 / DSM 467 / LMG 4362 / NCIMB 8255 / S1) protein is Imidazole glycerol phosphate synthase subunit HisH.